The sequence spans 399 residues: Acetate kinase (399 aa).

N8 is a binding site for Mg(2+). K15 lines the ATP pocket. Residue R89 participates in substrate binding. Residue D147 is the Proton donor/acceptor of the active site. Residues 207 to 211 (HMGNG), 284 to 286 (DMR), and 332 to 336 (GIGEN) each bind ATP. E385 contacts Mg(2+).

This sequence belongs to the acetokinase family. Homodimer. Mg(2+) serves as cofactor. Requires Mn(2+) as cofactor.

It localises to the cytoplasm. The enzyme catalyses acetate + ATP = acetyl phosphate + ADP. It functions in the pathway metabolic intermediate biosynthesis; acetyl-CoA biosynthesis; acetyl-CoA from acetate: step 1/2. Functionally, catalyzes the formation of acetyl phosphate from acetate and ATP. Can also catalyze the reverse reaction. The polypeptide is Acetate kinase (Streptococcus mutans serotype c (strain ATCC 700610 / UA159)).